Reading from the N-terminus, the 380-residue chain is Cytochrome b (380 aa).

The next 4 membrane-spanning stretches (helical) occupy residues 33–53, 77–98, 113–133, and 178–198; these read FGSL…FLAM, WLIR…FIHV, WNIG…GYVL, and FFAF…VHLL. Residues histidine 83 and histidine 97 each coordinate heme b. Residues histidine 182 and histidine 196 each contribute to the heme b site. Histidine 201 is a binding site for a ubiquinone. A run of 4 helical transmembrane segments spans residues 226–246, 288–308, 320–340, and 347–367; these read IKDI…VLFF, LGGV…PLLN, ITQT…WIGG, and FTTI…IFMP.

Belongs to the cytochrome b family. As to quaternary structure, the cytochrome bc1 complex contains 11 subunits: 3 respiratory subunits (MT-CYB, CYC1 and UQCRFS1), 2 core proteins (UQCRC1 and UQCRC2) and 6 low-molecular weight proteins (UQCRH/QCR6, UQCRB/QCR7, UQCRQ/QCR8, UQCR10/QCR9, UQCR11/QCR10 and a cleavage product of UQCRFS1). This cytochrome bc1 complex then forms a dimer. The cofactor is heme b.

It is found in the mitochondrion inner membrane. Its function is as follows. Component of the ubiquinol-cytochrome c reductase complex (complex III or cytochrome b-c1 complex) that is part of the mitochondrial respiratory chain. The b-c1 complex mediates electron transfer from ubiquinol to cytochrome c. Contributes to the generation of a proton gradient across the mitochondrial membrane that is then used for ATP synthesis. The protein is Cytochrome b (MT-CYB) of Microryzomys minutus (Forest small rice rat).